A 623-amino-acid polypeptide reads, in one-letter code: MAKKNYGQVYNILGWGDPYFTVNSHGHLAVKPHGRDTMSGQDIDVHSVIHRALATTITTNDGDKKPQFPMILRFPDVLKNRLDSLHAAFHGAVDSTGYASRYQGVFPIKVNQNKAVVQDLVTFGHGYSYGLEAGSKPELLIAMSCLAKAKPGAYLVCNGYKDADYVALALSARAMGLNAIIVLEMEEELDIVVEQSARLGVEPVIGVRAKLLTKIPGHFGSTAGKHGKFGMLADKIYEVAGKLKKMGKLHWLKLLHYHVGSMIPTTDIVYNAAAEAAGIYCALVKEHGATGMTTLDCGGGLGVDYDGTRSGSSDMSVAYGLEQYASSIVQAVRLTCDDNGVPHPVLCTESGRAMASHHSMIILEALSAIPEPQDEEDTHHRLLSKIQDLSSKQPRTAHTVNGGGGVDAMHSHAVELKKHGIEMYKLAKKLSKRVTGDANGIYNYHMNLSVFSLVPDFWGIGQLFPMMPVSRLNEKPTINGTLVDITCDSDGKVEKFIRDAVTLPLHPLDDAAAEHGGYYVAALLSGAYQEALACKHNLFSGPTLVRVESAGGGGAFKIVSVELGPTAEEVIGTMRYDVKNDISDVIEKVATENGVWPMVEPLMKKGLTTMPYLNDYKPPKTTF.

N6-(pyridoxal phosphate)lysine is present on Lys-109. Substrate is bound at residue 295–305; it reads LDCGGGLGVDY.

This sequence belongs to the Orn/Lys/Arg decarboxylase class-II family. SpeA subfamily. Pyridoxal 5'-phosphate serves as cofactor. Mg(2+) is required as a cofactor. In terms of tissue distribution, expressed in stems (at protein level).

It catalyses the reaction L-arginine + H(+) = agmatine + CO2. It functions in the pathway amine and polyamine biosynthesis; agmatine biosynthesis; agmatine from L-arginine: step 1/1. This is Arginine decarboxylase 2 (ADC2) from Oryza sativa subsp. japonica (Rice).